A 293-amino-acid polypeptide reads, in one-letter code: Probable endonuclease 4 (293 aa).

Zn(2+)-binding residues include histidine 75, histidine 115, glutamate 153, aspartate 187, histidine 190, histidine 224, aspartate 237, histidine 239, and glutamate 269.

Belongs to the AP endonuclease 2 family. Zn(2+) is required as a cofactor.

It catalyses the reaction Endonucleolytic cleavage to 5'-phosphooligonucleotide end-products.. Its function is as follows. Endonuclease IV plays a role in DNA repair. It cleaves phosphodiester bonds at apurinic or apyrimidinic (AP) sites, generating a 3'-hydroxyl group and a 5'-terminal sugar phosphate. This is Probable endonuclease 4 from Chlamydia pneumoniae (Chlamydophila pneumoniae).